The following is a 237-amino-acid chain: 1-(5-phosphoribosyl)-5-[(5-phosphoribosylamino)methylideneamino] imidazole-4-carboxamide isomerase (237 aa).

The active-site Proton acceptor is the aspartate 8. The active-site Proton donor is the aspartate 130.

This sequence belongs to the HisA/HisF family.

The protein localises to the cytoplasm. The enzyme catalyses 1-(5-phospho-beta-D-ribosyl)-5-[(5-phospho-beta-D-ribosylamino)methylideneamino]imidazole-4-carboxamide = 5-[(5-phospho-1-deoxy-D-ribulos-1-ylimino)methylamino]-1-(5-phospho-beta-D-ribosyl)imidazole-4-carboxamide. Its pathway is amino-acid biosynthesis; L-histidine biosynthesis; L-histidine from 5-phospho-alpha-D-ribose 1-diphosphate: step 4/9. This is 1-(5-phosphoribosyl)-5-[(5-phosphoribosylamino)methylideneamino] imidazole-4-carboxamide isomerase from Caldicellulosiruptor saccharolyticus (strain ATCC 43494 / DSM 8903 / Tp8T 6331).